The following is a 230-amino-acid chain: Uracil-DNA glycosylase (230 aa).

The active-site Proton acceptor is Asp70.

The protein belongs to the uracil-DNA glycosylase (UDG) superfamily. UNG family.

It is found in the cytoplasm. It catalyses the reaction Hydrolyzes single-stranded DNA or mismatched double-stranded DNA and polynucleotides, releasing free uracil.. Excises uracil residues from the DNA which can arise as a result of misincorporation of dUMP residues by DNA polymerase or due to deamination of cytosine. This chain is Uracil-DNA glycosylase, found in Pseudomonas syringae pv. syringae (strain B728a).